A 587-amino-acid chain; its full sequence is MESNGGGGGSPKEAAVVVPSSGDATLGGHLARRLVQVGVSDVFAVPGDFNLTLLDHLIAEPGLRVVGCCNELNAGYAADGYARARGVGACAVTFTVGGLSVLNAIGGAYSENLPLICIVGGPNSNDYGTNRILHHTIGLPDFSQELRCFQPLTCYQAVVNNLDDAHDQIDRAISTAIRESKPVYISVSCNLPAVPHPTFSRDPVPYFLSPRLSNQASLHAALDATLAFLDKAVKPVLVAGPKLRVAKAGGAFVDLADASGHAVAAMPSAKGLVPETLPRFIGTYWGAVSTAFCAEIVESADAYLFAGPIFNDYSSVGYSCLLKKEKAVVVQPDRVTVGNGPAFGCVMMRDFLSELAKRVRKNTTAFDNYKRIFVPEGQLPECEAGEALRVNVLFKHIQRMIGGTEIGAVMAETGDSWFNCQKLRLPEGCGYEFQMQYGSIGWSVGALLGYAQAVQKRVVACIGDGSFQVTAQDVSTMLRCGQRSIIFLINNGGYTIEVEIHDGPYNVIKNWDYVGLVNAIHNGEGRCWATRVRCEEELEAAIATATGDKADSLCFIEVVAHKDDTSKELLEWGSRVSAANSRPPNPQ.

Substrate contacts are provided by aspartate 48 and histidine 135. The thiamine pyrophosphate binding stretch occupies residues 415–496 (DSWFNCQKLR…FLINNGGYTI (82 aa)). The Mg(2+) site is built by aspartate 464, asparagine 491, and glycine 493. Glutamate 497 is a binding site for substrate.

It belongs to the TPP enzyme family. In terms of assembly, homotetramer. Requires a metal cation as cofactor. It depends on thiamine diphosphate as a cofactor.

The enzyme catalyses a 2-oxocarboxylate + H(+) = an aldehyde + CO2. The chain is Pyruvate decarboxylase 3 (PDC3) from Oryza sativa subsp. japonica (Rice).